A 270-amino-acid polypeptide reads, in one-letter code: Putative envelope-preserving system protein Rv2743c (270 aa).

A run of 2 helical transmembrane segments spans residues alanine 50–alanine 72 and phenylalanine 77–leucine 99.

Interacts with PspA and Rv2742c.

It localises to the membrane. Its function is as follows. Involved in preservation of envelope integrity and tolerance to surface stress. Reverses the inhibitory effect of PspA on ClgR activity. Facilitates intracellular growth of M.tuberculosis. The sequence is that of Putative envelope-preserving system protein Rv2743c from Mycobacterium tuberculosis (strain ATCC 25618 / H37Rv).